The primary structure comprises 444 residues: Putative GTP cyclohydrolase URC1 (444 aa).

268–272 (RVHDE) contacts GTP. The Zn(2+) site is built by Cys273, Cys284, and Cys286. 315–317 (EGR) provides a ligand contact to GTP. Asp353 serves as the catalytic Proton acceptor. Arg355 functions as the Nucleophile in the catalytic mechanism. GTP-binding residues include Ser377 and Lys382.

Belongs to the GTP cyclohydrolase II family.

The protein localises to the cytoplasm. The protein resides in the nucleus. Functionally, involved in uracil catabolism. The sequence is that of Putative GTP cyclohydrolase URC1 (URC1) from Lachancea kluyveri (Yeast).